We begin with the raw amino-acid sequence, 395 residues long: Acetate kinase (395 aa).

Asparagine 8 is a binding site for Mg(2+). Lysine 15 contributes to the ATP binding site. Arginine 89 serves as a coordination point for substrate. Aspartate 146 serves as the catalytic Proton donor/acceptor. ATP contacts are provided by residues 206–210, 281–283, and 329–333; these read HLGNG, DLR, and GIGEN. Mg(2+) is bound at residue glutamate 382.

Belongs to the acetokinase family. In terms of assembly, homodimer. Mg(2+) is required as a cofactor. Requires Mn(2+) as cofactor.

The protein resides in the cytoplasm. It catalyses the reaction acetate + ATP = acetyl phosphate + ADP. It functions in the pathway metabolic intermediate biosynthesis; acetyl-CoA biosynthesis; acetyl-CoA from acetate: step 1/2. Its function is as follows. Catalyzes the formation of acetyl phosphate from acetate and ATP. Can also catalyze the reverse reaction. The polypeptide is Acetate kinase (Bacillus velezensis (strain DSM 23117 / BGSC 10A6 / LMG 26770 / FZB42) (Bacillus amyloliquefaciens subsp. plantarum)).